The chain runs to 181 residues: MDDLTAQALKDFTARYCDAWHEEHKSWPLSEELYGVPSPCIISTTEDAVYWQPQPFTGEQNVNAVERAFDIVIQPTIHTFYTTQFAGDMHAQFGDIKLTLLQTWSEDDFRRVQENLIGHLVTQKRLKLPPTLFIATLEEELEVISVCNLSGEVCKETLGTRKRTNLASNLAEFLNQLKPLL.

The protein belongs to the Syd family.

The protein resides in the cell inner membrane. Functionally, interacts with the SecY protein in vivo. May bind preferentially to an uncomplexed state of SecY, thus functioning either as a chelating agent for excess SecY in the cell or as a regulatory factor that negatively controls the translocase function. The polypeptide is Protein Syd (Shigella flexneri).